We begin with the raw amino-acid sequence, 366 residues long: MKSKYSIFCMFLLRGFIFLGTVFSLNSAELRLKDIARIEGVRENQITGYGIVVGLPGTGDSKTPFTSESMKNYLKNLGVEANLKPDQTRNIASVLITATIPTYSRKGDKLNVVVSSIGDAKSLEGGVLLQSPLKTAGDKTYAVASGVISFGGRQEQERGSSSRGNKKTVGVVHGGAIVEQELDQNFYASERVQIQLENQDFTTLNAIVSKIRSILPGKHGIGPESVVPISPSEINIVLGKSFENKSDAFLTLLSDIENLTVETQTKPKVVINERTGVIVMGGNITIEEVAVSRSGLNLSVTDKNRRRNWLGKEQEPTKSSFLIEESTSVGDVVEALNKVGASTKDIIAILEALKKSGALHAELEIQ.

The signal sequence occupies residues 1–27 (MKSKYSIFCMFLLRGFIFLGTVFSLNS).

The protein belongs to the FlgI family. The basal body constitutes a major portion of the flagellar organelle and consists of four rings (L,P,S, and M) mounted on a central rod.

The protein localises to the periplasm. It localises to the bacterial flagellum basal body. Assembles around the rod to form the L-ring and probably protects the motor/basal body from shearing forces during rotation. This is Flagellar P-ring protein from Leptospira interrogans serogroup Icterohaemorrhagiae serovar copenhageni (strain Fiocruz L1-130).